Here is a 323-residue protein sequence, read N- to C-terminus: Peroxisome biogenesis protein 20 (323 aa).

C8 is covalently cross-linked (Glycyl cysteine thioester (Cys-Gly) (interchain with G-Cter in ubiquitin)). Residue K19 forms a Glycyl lysine isopeptide (Lys-Gly) (interchain with G-Cter in ubiquitin) linkage. 3 short sequence motifs (wxxxF/Y motif) span residues 89 to 93, 102 to 105, and 141 to 145; these read WSSEF, WVED, and WTQEF.

The protein belongs to the peroxisomal targeting signal receptor family. Interacts (via WxxxF/Y and LVxEF motifs) with PEX14; promoting translocation through the PEX13-PEX14 docking complex. Interacts with PEX7. In terms of processing, monoubiquitinated at Cys-8 by PEX2 during PEX20 passage through the PEX2-PEX10-PEX12 retrotranslocation channel: monoubiquitination acts as a signal for PEX20 extraction and is required for proper export from peroxisomes and recycling. When PEX5 recycling is compromised, polyubiquitinated at Lys-19 by PEX10 during its passage through the retrotranslocation channel, leading to its degradation.

Its subcellular location is the cytoplasm. It localises to the cytosol. It is found in the peroxisome matrix. Coreceptor required for the peroxisomal import of proteins containing a C-terminal PTS2-type peroxisomal targeting signal, such as 3-oxoacyl-CoA thiolase. Acts via its interaction with PEX7, promoting association between PEX7 bound to cargo proteins and the PEX13-PEX14 docking complex. PEX20 along with PEX7 and PTS2-containing cargo proteins are tranlocated into peroxisomes by passing through the PEX13-PEX14 docking complex. PEX20 coreceptor is then retrotranslocated into the cytosol, leading to release of bound cargo in the peroxisome matrix, and reset for a subsequent peroxisome import cycle. Also mediates peroxisomal import of proteins that do not contain PTS1- or PTS2-type peroxisomal targeting signals, such as acyl-CoA oxidases (Aox) izozymes. Import of acyl-CoA oxidases (Aox) izozymes is independent of PEX7. Required for PEX7 ubiquitination. This chain is Peroxisome biogenesis protein 20, found in Komagataella pastoris (Yeast).